The primary structure comprises 31 residues: Photosystem II reaction center protein T (31 aa).

Residues 3-23 (ALVYVFLLTGTLMVIFFAIFF) traverse the membrane as a helical segment.

Belongs to the PsbT family. PSII is composed of 1 copy each of membrane proteins PsbA, PsbB, PsbC, PsbD, PsbE, PsbF, PsbH, PsbI, PsbJ, PsbK, PsbL, PsbM, PsbT, PsbX, PsbY, PsbZ, Psb30/Ycf12, at least 3 peripheral proteins of the oxygen-evolving complex and a large number of cofactors. It forms dimeric complexes.

The protein localises to the plastid. The protein resides in the chloroplast thylakoid membrane. Functionally, found at the monomer-monomer interface of the photosystem II (PS II) dimer, plays a role in assembly and dimerization of PSII. PSII is a light-driven water plastoquinone oxidoreductase, using light energy to abstract electrons from H(2)O, generating a proton gradient subsequently used for ATP formation. The protein is Photosystem II reaction center protein T of Pyropia yezoensis (Susabi-nori).